The chain runs to 72 residues: Teretoxin Tan11.1 (72 aa).

The first 21 residues, methionine 1–leucine 21, serve as a signal peptide directing secretion. Positions proline 22 to arginine 31 are excised as a propeptide.

The protein belongs to the teretoxin H (TH) superfamily. Post-translationally, contains 4 disulfide bonds. Expressed by the venom duct.

Its subcellular location is the secreted. The sequence is that of Teretoxin Tan11.1 from Terebra anilis (Auger snail).